Here is a 404-residue protein sequence, read N- to C-terminus: Cysteine desulfurase IscS (404 aa).

Residues 75-76 (AT), Asn155, Gln183, and 203-205 (SAH) contribute to the pyridoxal 5'-phosphate site. Residue Lys206 is modified to N6-(pyridoxal phosphate)lysine. Thr243 is a pyridoxal 5'-phosphate binding site. The active-site Cysteine persulfide intermediate is the Cys328. Cys328 contributes to the [2Fe-2S] cluster binding site.

It belongs to the class-V pyridoxal-phosphate-dependent aminotransferase family. NifS/IscS subfamily. As to quaternary structure, homodimer. Forms a heterotetramer with IscU, interacts with other sulfur acceptors. Requires pyridoxal 5'-phosphate as cofactor.

It localises to the cytoplasm. It catalyses the reaction (sulfur carrier)-H + L-cysteine = (sulfur carrier)-SH + L-alanine. Its pathway is cofactor biosynthesis; iron-sulfur cluster biosynthesis. Functionally, master enzyme that delivers sulfur to a number of partners involved in Fe-S cluster assembly, tRNA modification or cofactor biosynthesis. Catalyzes the removal of elemental sulfur atoms from cysteine to produce alanine. Functions as a sulfur delivery protein for Fe-S cluster synthesis onto IscU, an Fe-S scaffold assembly protein, as well as other S acceptor proteins. This is Cysteine desulfurase IscS from Photorhabdus laumondii subsp. laumondii (strain DSM 15139 / CIP 105565 / TT01) (Photorhabdus luminescens subsp. laumondii).